The primary structure comprises 806 residues: Ent-atiserene synthase KSL4, chloroplastic (806 aa).

Residues 1-75 constitute a chloroplast transit peptide; the sequence is MGIVALILIK…AKLFKKNEVC (75 aa). Positions 33 to 56 are disordered; sequence ASLAGSGLPKTTPPKTASLQSHSP. Residues 45-55 show a composition bias toward polar residues; it reads PPKTASLQSHS. The Mg(2+) site is built by Asp-556, Asp-560, Asn-700, and Glu-708. The DDXXD motif motif lies at 556 to 560; it reads DDLFD.

The protein belongs to the terpene synthase family. Mg(2+) serves as cofactor. In terms of tissue distribution, highly expressed in leaves, and, at low levels, in roots, stems and flowers.

It localises to the plastid. The protein resides in the chloroplast. The enzyme catalyses ent-copalyl diphosphate = ent-atiserene + diphosphate. The protein operates within secondary metabolite biosynthesis; terpenoid biosynthesis. In terms of biological role, involved in the biosynthesis of ent-kaurene diterpenoids natural products such as oridonin, miltiradiene, eriocalyxin B and nezukol, known to exhibit antitumor, anti-inflammatory and antibacterial activities. Catalyzes the conversion of ent-copalyl diphosphate (ent-CPP) to ent-atiserene. In Isodon rubescens (Rabdosia rubescens), this protein is Ent-atiserene synthase KSL4, chloroplastic.